Consider the following 634-residue polypeptide: Fluorothreonine transaldolase (634 aa).

Positions 67, 221, and 247 each coordinate pyridoxal 5'-phosphate. Lys248 carries the post-translational modification N6-(pyridoxal phosphate)lysine. Arg375 is a binding site for pyridoxal 5'-phosphate. The disordered stretch occupies residues Thr428–Pro456.

The protein belongs to the SHMT family. Pyridoxal 5'-phosphate is required as a cofactor.

It catalyses the reaction fluoroacetaldehyde + L-threonine = 4-fluoro-L-threonine + acetaldehyde. In terms of biological role, transaldolase that catalyzes the final step in 4-fluorothreonine biosynthesis. Mediates a L-threonine/fluoroaceldehyde to 4-fluoro-L-threonine/acetaldehyde crossover reaction. Can also convert chloroacetaldehyde into 4-chloro-L-threonine. Does not use glycine as a substrate. The protein is Fluorothreonine transaldolase of Streptantibioticus cattleyicolor (Streptomyces cattleya).